Here is a 222-residue protein sequence, read N- to C-terminus: Glutathione S-transferase A4 (222 aa).

Met1 carries the N-acetylmethionine modification. One can recognise a GST N-terminal domain in the interval 3 to 83 (ARPKLHYPNG…YIADKHNLFG (81 aa)). Residues Tyr9, 54 to 55 (QV), and 67 to 68 (QT) contribute to the glutathione site. Residues 85–208 (NLKERTLIDM…EPGSKKKPPP (124 aa)) enclose the GST C-terminal domain. Tyr212 provides a ligand contact to substrate.

It belongs to the GST superfamily. Alpha family. Homodimer. As to expression, expressed at a high level in brain, placenta, and skeletal muscle and much lower in lung and liver.

It is found in the cytoplasm. The catalysed reaction is RX + glutathione = an S-substituted glutathione + a halide anion + H(+). Its function is as follows. Conjugation of reduced glutathione to a wide number of exogenous and endogenous hydrophobic electrophiles. This isozyme has a high catalytic efficiency with 4-hydroxyalkenals such as 4-hydroxynonenal (4-HNE). This is Glutathione S-transferase A4 (GSTA4) from Homo sapiens (Human).